A 204-amino-acid polypeptide reads, in one-letter code: FMN-dependent NADH:quinone oxidoreductase (204 aa).

Residues serine 9, 15–17 (SVS), and 97–100 (MYNF) each bind FMN.

Belongs to the azoreductase type 1 family. Homodimer. FMN serves as cofactor.

It carries out the reaction 2 a quinone + NADH + H(+) = 2 a 1,4-benzosemiquinone + NAD(+). The catalysed reaction is N,N-dimethyl-1,4-phenylenediamine + anthranilate + 2 NAD(+) = 2-(4-dimethylaminophenyl)diazenylbenzoate + 2 NADH + 2 H(+). Its function is as follows. Quinone reductase that provides resistance to thiol-specific stress caused by electrophilic quinones. In terms of biological role, also exhibits azoreductase activity. Catalyzes the reductive cleavage of the azo bond in aromatic azo compounds to the corresponding amines. The sequence is that of FMN-dependent NADH:quinone oxidoreductase from Methylobacterium radiotolerans (strain ATCC 27329 / DSM 1819 / JCM 2831 / NBRC 15690 / NCIMB 10815 / 0-1).